Here is a 286-residue protein sequence, read N- to C-terminus: Divergent deoxyribose-phosphate aldolase-like protein (286 aa).

Homodimer. Interacts with ADF; the interaction enhances ADF activity in disassembly of filamentous actin and inhibition of actin polymerization.

It is found in the cytoplasm. Involved in regulation of actin dynamics. This Toxoplasma gondii protein is Divergent deoxyribose-phosphate aldolase-like protein.